A 471-amino-acid polypeptide reads, in one-letter code: Delta(24(24(1)))-sterol reductase erg4A (471 aa).

Asparagine 15 carries an N-linked (GlcNAc...) asparagine glycan. Transmembrane regions (helical) follow at residues 33–53, 89–109, 130–150, 159–179, 216–236, 244–264, 282–302, and 313–333; these read VTLI…GAVL, WTIY…LPGV, AVSS…TGVL, FGPL…VAYI, MFFE…GTAL, LVAG…NACA, GFML…HCTL, and HWNP…YWVW. Residues lysine 340, arginine 344, leucine 380, and 392 to 393 contribute to the NADP(+) site; that span reads HY. The chain crosses the membrane as a helical span at residues 397–417; sequence VFFAISWGLITGFNSPFPWFY. NADP(+)-binding positions include aspartate 432, 436-440, and tyrosine 447; that span reads CRERY.

This sequence belongs to the ERG4/ERG24 family.

It localises to the endoplasmic reticulum membrane. It carries out the reaction ergosterol + NADP(+) = ergosta-5,7,22,24(28)-tetraen-3beta-ol + NADPH + H(+). It participates in steroid metabolism; ergosterol biosynthesis. Functionally, delta(24(24(1)))-sterol reductase; part of the third module of ergosterol biosynthesis pathway that includes the late steps of the pathway. Catalyzes the last step of ergosterol biosynthesis by converting ergosta-5,7,22,24(28)-tetraen-3beta-ol into ergosterol. The third module or late pathway involves the ergosterol synthesis itself through consecutive reactions that mainly occur in the endoplasmic reticulum (ER) membrane. Firstly, the squalene synthase erg9 catalyzes the condensation of 2 farnesyl pyrophosphate moieties to form squalene, which is the precursor of all steroids. Squalene synthase is crucial for balancing the incorporation of farnesyl diphosphate (FPP) into sterol and nonsterol isoprene synthesis. Secondly, squalene is converted into lanosterol by the consecutive action of the squalene epoxidase erg1 and the lanosterol synthase erg7. Then, the delta(24)-sterol C-methyltransferase erg6 methylates lanosterol at C-24 to produce eburicol. Eburicol is the substrate of the sterol 14-alpha demethylase encoded by cyp51A and cyp51B, to yield 4,4,24-trimethyl ergosta-8,14,24(28)-trienol. The C-14 reductase erg24 then reduces the C14=C15 double bond which leads to 4,4-dimethylfecosterol. A sequence of further demethylations at C-4, involving the C-4 demethylation complex containing the C-4 methylsterol oxidases erg25A or erg25B, the sterol-4-alpha-carboxylate 3-dehydrogenase erg26 and the 3-keto-steroid reductase erg27, leads to the production of fecosterol via 4-methylfecosterol. The C-8 sterol isomerase erg2 then catalyzes the reaction which results in unsaturation at C-7 in the B ring of sterols and thus converts fecosterol to episterol. The sterol-C5-desaturase erg3B then catalyzes the introduction of a C-5 double bond in the B ring to produce 5-dehydroepisterol. The 2 other sterol-C5-desaturases, erg3A and erg3C, seem to be less important in ergosterol biosynthesis. The C-22 sterol desaturase erg5 further converts 5-dehydroepisterol into ergosta-5,7,22,24(28)-tetraen-3beta-ol by forming the C-22(23) double bond in the sterol side chain. Finally, ergosta-5,7,22,24(28)-tetraen-3beta-ol is substrate of the C-24(28) sterol reductases erg4A and erg4B to produce ergosterol. Possible alternative sterol biosynthetic pathways might exist from fecosterol to ergosterol, depending on the activities of the erg3 isoforms. In Aspergillus fumigatus (strain ATCC MYA-4609 / CBS 101355 / FGSC A1100 / Af293) (Neosartorya fumigata), this protein is Delta(24(24(1)))-sterol reductase erg4A.